Reading from the N-terminus, the 428-residue chain is tRNA(Ile2) 2-agmatinylcytidine synthetase TiaS (428 aa).

The protein belongs to the TiaS family.

It localises to the cytoplasm. It carries out the reaction cytidine(34) in tRNA(Ile2) + agmatine + ATP + H2O = 2-agmatinylcytidine(34) in tRNA(Ile2) + AMP + 2 phosphate + 2 H(+). Functionally, ATP-dependent agmatine transferase that catalyzes the formation of 2-agmatinylcytidine (agm2C) at the wobble position (C34) of tRNA(Ile2), converting the codon specificity from AUG to AUA. The sequence is that of tRNA(Ile2) 2-agmatinylcytidine synthetase TiaS from Methanosarcina acetivorans (strain ATCC 35395 / DSM 2834 / JCM 12185 / C2A).